The primary structure comprises 537 residues: Tyrosine-protein kinase Fyn (537 aa).

Glycine 2 carries N-myristoyl glycine lipidation. 2 S-palmitoyl cysteine lipidation sites follow: cysteine 3 and cysteine 6. Threonine 12 carries the phosphothreonine; by PKC modification. Positions 14–35 (LTEERDGSLNQSSGYRYGTDPT) are disordered. Phosphoserine is present on residues serine 21 and serine 26. In terms of domain architecture, SH3 spans 82–143 (TGVTLFVALY…PSNYVAPVDS (62 aa)). In terms of domain architecture, SH2 spans 149 to 246 (WYFGKLGRKD…GLCCRLVVPC (98 aa)). A Phosphotyrosine modification is found at tyrosine 185. The region spanning 271 to 524 (LQLIKRLGNG…YLQSFLEDYF (254 aa)) is the Protein kinase domain. Residues 277 to 285 (LGNGQFGEV) and lysine 299 each bind ATP. Catalysis depends on aspartate 390, which acts as the Proton acceptor. Position 420 is a phosphotyrosine; by autocatalysis (tyrosine 420). Tyrosine 531 is modified (phosphotyrosine; by CSK).

This sequence belongs to the protein kinase superfamily. Tyr protein kinase family. SRC subfamily. Interacts (via its SH3 domain) with PIK3R1 and PRMT8. Interacts with FYB1, PAG1, and SH2D1A. Interacts with CD79A (tyrosine-phosphorylated form); the interaction increases FYN activity. Interacts (via SH2 domain) with CSF1R (tyrosine phosphorylated). Interacts with TOM1L1 (phosphorylated form). Interacts with KDR (tyrosine phosphorylated). Interacts (via SH3 domain) with KLHL2 (via N-terminus). Interacts with SH2D1A and SLAMF1. Interacts with ITCH; the interaction phosphorylates ITCH and negatively regulates its activity. Interacts with FASLG. Interacts with RUNX3. Interacts with KIT. Interacts with EPHA8; possible downstream effector of EPHA8 in regulation of cell adhesion. Interacts with PTK2/FAK1; this interaction leads to PTK2/FAK1 phosphorylation and activation. Interacts with CAV1; this interaction couples integrins to the Ras-ERK pathway. Interacts with UNC119. Interacts (via SH2 domain) with PTPRH (phosphorylated form). Interacts with PTPRO (phosphorylated form). Interacts with PTPRB (phosphorylated form). Interacts with FYB2. Interacts with DSCAM. Interacts with SKAP1 and FYB1; this interaction promotes the phosphorylation of CLNK. Interacts with NEDD9; in the presence of PTK2. In terms of assembly, (Microbial infection) Interacts (via its SH3 domain) with hepatitis E virus/HEV protein ORF3. Mn(2+) serves as cofactor. Autophosphorylated at Tyr-420. Phosphorylation on the C-terminal tail at Tyr-531 by CSK maintains the enzyme in an inactive state. PTPRC/CD45 dephosphorylates Tyr-531 leading to activation. Ultraviolet B (UVB) strongly increase phosphorylation at Thr-12 and kinase activity, and promotes translocation from the cytoplasm to the nucleus. Dephosphorylation at Tyr-420 by PTPN2 negatively regulates T-cell receptor signaling. Phosphorylated at tyrosine residues, which can be enhanced by NTN1. In terms of processing, palmitoylated. Palmitoylation at Cys-3 and Cys-6, probably by ZDHHC21, regulates subcellular location. In terms of tissue distribution, isoform 1 is highly expressed in the brain. Isoform 2 is expressed in cells of hemopoietic lineages, especially T-lymphocytes.

It localises to the cytoplasm. It is found in the nucleus. Its subcellular location is the cell membrane. The protein localises to the perikaryon. The catalysed reaction is L-tyrosyl-[protein] + ATP = O-phospho-L-tyrosyl-[protein] + ADP + H(+). Inhibited by phosphorylation of Tyr-531 by leukocyte common antigen and activated by dephosphorylation of this site. Its function is as follows. Non-receptor tyrosine-protein kinase that plays a role in many biological processes including regulation of cell growth and survival, cell adhesion, integrin-mediated signaling, cytoskeletal remodeling, cell motility, immune response and axon guidance. Inactive FYN is phosphorylated on its C-terminal tail within the catalytic domain. Following activation by PKA, the protein subsequently associates with PTK2/FAK1, allowing PTK2/FAK1 phosphorylation, activation and targeting to focal adhesions. Involved in the regulation of cell adhesion and motility through phosphorylation of CTNNB1 (beta-catenin) and CTNND1 (delta-catenin). Regulates cytoskeletal remodeling by phosphorylating several proteins including the actin regulator WAS and the microtubule-associated proteins MAP2 and MAPT. Promotes cell survival by phosphorylating AGAP2/PIKE-A and preventing its apoptotic cleavage. Participates in signal transduction pathways that regulate the integrity of the glomerular slit diaphragm (an essential part of the glomerular filter of the kidney) by phosphorylating several slit diaphragm components including NPHS1, KIRREL1 and TRPC6. Plays a role in neural processes by phosphorylating DPYSL2, a multifunctional adapter protein within the central nervous system, ARHGAP32, a regulator for Rho family GTPases implicated in various neural functions, and SNCA, a small pre-synaptic protein. Involved in reelin signaling by mediating phosphorylation of DAB1 following reelin (RELN)-binding to its receptor. Participates in the downstream signaling pathways that lead to T-cell differentiation and proliferation following T-cell receptor (TCR) stimulation. Phosphorylates PTK2B/PYK2 in response to T-cell receptor activation. Also participates in negative feedback regulation of TCR signaling through phosphorylation of PAG1, thereby promoting interaction between PAG1 and CSK and recruitment of CSK to lipid rafts. CSK maintains LCK and FYN in an inactive form. Promotes CD28-induced phosphorylation of VAV1. In mast cells, phosphorylates CLNK after activation of immunoglobulin epsilon receptor signaling. Can also promote CD244-mediated NK cell activation. The sequence is that of Tyrosine-protein kinase Fyn (FYN) from Homo sapiens (Human).